The sequence spans 346 residues: Holliday junction branch migration complex subunit RuvB (346 aa).

Positions 4–185 (SDRIITASPF…FGIVSRLEFY (182 aa)) are large ATPase domain (RuvB-L). Residues leucine 24, arginine 25, glycine 66, lysine 69, threonine 70, threonine 71, 132 to 134 (EDY), arginine 175, tyrosine 185, and arginine 222 each bind ATP. Residue threonine 70 coordinates Mg(2+). Residues 186–256 (TADELGKIVT…VADAALQMLD (71 aa)) form a small ATPAse domain (RuvB-S) region. The interval 259–346 (ATGLDVLDRK…TTVPSLFDPD (88 aa)) is head domain (RuvB-H). DNA is bound by residues arginine 295, arginine 314, and arginine 319.

Belongs to the RuvB family. Homohexamer. Forms an RuvA(8)-RuvB(12)-Holliday junction (HJ) complex. HJ DNA is sandwiched between 2 RuvA tetramers; dsDNA enters through RuvA and exits via RuvB. An RuvB hexamer assembles on each DNA strand where it exits the tetramer. Each RuvB hexamer is contacted by two RuvA subunits (via domain III) on 2 adjacent RuvB subunits; this complex drives branch migration. In the full resolvosome a probable DNA-RuvA(4)-RuvB(12)-RuvC(2) complex forms which resolves the HJ.

The protein localises to the cytoplasm. It carries out the reaction ATP + H2O = ADP + phosphate + H(+). Its function is as follows. The RuvA-RuvB-RuvC complex processes Holliday junction (HJ) DNA during genetic recombination and DNA repair, while the RuvA-RuvB complex plays an important role in the rescue of blocked DNA replication forks via replication fork reversal (RFR). RuvA specifically binds to HJ cruciform DNA, conferring on it an open structure. The RuvB hexamer acts as an ATP-dependent pump, pulling dsDNA into and through the RuvAB complex. RuvB forms 2 homohexamers on either side of HJ DNA bound by 1 or 2 RuvA tetramers; 4 subunits per hexamer contact DNA at a time. Coordinated motions by a converter formed by DNA-disengaged RuvB subunits stimulates ATP hydrolysis and nucleotide exchange. Immobilization of the converter enables RuvB to convert the ATP-contained energy into a lever motion, pulling 2 nucleotides of DNA out of the RuvA tetramer per ATP hydrolyzed, thus driving DNA branch migration. The RuvB motors rotate together with the DNA substrate, which together with the progressing nucleotide cycle form the mechanistic basis for DNA recombination by continuous HJ branch migration. Branch migration allows RuvC to scan DNA until it finds its consensus sequence, where it cleaves and resolves cruciform DNA. The protein is Holliday junction branch migration complex subunit RuvB of Nitrosomonas europaea (strain ATCC 19718 / CIP 103999 / KCTC 2705 / NBRC 14298).